The chain runs to 149 residues: Large ribosomal subunit protein bL9 (149 aa).

Belongs to the bacterial ribosomal protein bL9 family. As to quaternary structure, part of the 50S ribosomal subunit. In stalled/collided disomes (pairs of ribosomes where the leading ribosome is stalled and a second ribosome has collided with it), bL9 in the collided ribosome contacts bS6 and uL2, while it contacts only helices of the 16S rRNA in the stalled ribosome; the inter-ribosome bridge thus formed is different from that formed between normally translating ribosomes.

Functionally, binds to the 23S rRNA. The polypeptide is Large ribosomal subunit protein bL9 (Bacillus subtilis (strain 168)).